The following is a 412-amino-acid chain: Translation initiation factor 2 subunit gamma (412 aa).

The tr-type G domain occupies 7–203 (QPEVNIGLVG…AIESEIPTPD (197 aa)). Residues 16–23 (GHVDHGKT) are G1. Mg(2+)-binding residues include aspartate 19, threonine 23, glycine 44, and serine 46. GTP is bound at residue 19 to 24 (DHGKTT). Positions 44-48 (GISIR) are G2. The interval 90–93 (DAPG) is G3. Residues 146–149 (NKVD) and 181–183 (SAQ) each bind GTP. Residues 146–149 (NKVD) form a G4 region. The G5 stretch occupies residues 181-183 (SAQ).

The protein belongs to the TRAFAC class translation factor GTPase superfamily. Classic translation factor GTPase family. EIF2G subfamily. Heterotrimer composed of an alpha, a beta and a gamma chain. Mg(2+) serves as cofactor.

It catalyses the reaction GTP + H2O = GDP + phosphate + H(+). Functionally, eIF-2 functions in the early steps of protein synthesis by forming a ternary complex with GTP and initiator tRNA. This Halorubrum lacusprofundi (strain ATCC 49239 / DSM 5036 / JCM 8891 / ACAM 34) protein is Translation initiation factor 2 subunit gamma.